The following is a 206-amino-acid chain: MKKWTNRLMTIAGVVLILVAAYLFAKPHIDNYLHDKDKDEKIEQYDKNVKEQASKDKKQQAKPQIPKDKSKVAGYIEIPDADIKEPVYPGPATPEQLNRGVSFAEENESLDDQNISIAGHTFIDRPNYQFTNLKAAKKGSMVYFKVGNETRKYKMTSIRDVKPTDVGVLDEQKGKDKQLTLITCDDYNEKTGVWEKRKIFVATEVK.

The Cytoplasmic portion of the chain corresponds to 1–6; that stretch reads MKKWTN. The chain crosses the membrane as a helical span at residues 7–24; it reads RLMTIAGVVLILVAAYLF. Over 25-206 the chain is Extracellular; it reads AKPHIDNYLH…RKIFVATEVK (182 aa). The tract at residues 49-69 is disordered; it reads VKEQASKDKKQQAKPQIPKDK. The Ca(2+) site is built by Glu-105, Glu-108, Asp-112, and Asn-114. His-120 serves as the catalytic Proton donor/acceptor. A Ca(2+)-binding site is contributed by Glu-171. Cys-184 serves as the catalytic Acyl-thioester intermediate.

This sequence belongs to the bacterial sortase family. Class A subfamily. Monomer and homodimer; in equilibrium.

It localises to the cell membrane. The enzyme catalyses The enzyme catalyzes a cell wall sorting reaction in which a surface protein with a sorting signal containing a LPXTG motif is cleaved between the Thr and Gly residue. The resulting threonine carboxyl end of the protein is covalently attached to a pentaglycine cross-bridge of peptidoglycan.. Sortase activity is regulated by monomer-homodimer equilibrium. Mutant cells with monomeric SrtA display more adhesive proteins on the cell surface and are more invasive than wild-type cells, which have majority of SrtA in dimeric form. Dimerization may suppress the enzymatic activity on cell membranes. Stimulated by calcium ions, which promote substrate binding. Calcium ions bind to SrtA and modulate both the structure and dynamics of a large active site loop. Can also be stimulated, to a lesser extent, by Mg(2+) and Mn(2+). Inhibited by sulfhydryl-modifying reagents. Transpeptidase that anchors surface proteins to the cell wall. Recognizes and modifies its substrate by proteolytic cleavage of a C-terminal sorting signal. Following cleavage, a covalent intermediate is formed via a thioester bond between the sortase and its substrate, which is then transferred and covalently attached to the cell wall. This sortase recognizes a Leu-Pro-x-Thr-Gly (LPXTG) motif, which is cleaved by the sortase between the threonine and glycine residues. Utilizes lipid II as the peptidoglycan substrate for the sorting reaction. Responsible for the display of important virulence factors. Important for interactions with the host and host colonization during infection. This chain is Sortase A, found in Staphylococcus aureus (strain NCTC 8325 / PS 47).